A 724-amino-acid polypeptide reads, in one-letter code: Methionine--tRNA ligase (724 aa).

The 'HIGH' region signature appears at 12 to 22 (PYVNNIPHLGN). Zn(2+) is bound by residues Cys-143, Cys-146, Cys-155, and Cys-158. Positions 330–334 (KFSKS) match the 'KMSKS' region motif. Lys-333 contacts ATP. Residues 560–665 (FREKVLLKVV…KNPIPGERII (106 aa)) form the tRNA-binding domain.

Belongs to the class-I aminoacyl-tRNA synthetase family. MetG type 1 subfamily. In terms of assembly, homodimer. Zn(2+) serves as cofactor.

Its subcellular location is the cytoplasm. It carries out the reaction tRNA(Met) + L-methionine + ATP = L-methionyl-tRNA(Met) + AMP + diphosphate. In terms of biological role, is required not only for elongation of protein synthesis but also for the initiation of all mRNA translation through initiator tRNA(fMet) aminoacylation. This chain is Methionine--tRNA ligase, found in Borrelia garinii subsp. bavariensis (strain ATCC BAA-2496 / DSM 23469 / PBi) (Borreliella bavariensis).